A 142-amino-acid chain; its full sequence is Large ribosomal subunit protein uL13 (142 aa).

The protein belongs to the universal ribosomal protein uL13 family. In terms of assembly, part of the 50S ribosomal subunit.

Functionally, this protein is one of the early assembly proteins of the 50S ribosomal subunit, although it is not seen to bind rRNA by itself. It is important during the early stages of 50S assembly. This Tolumonas auensis (strain DSM 9187 / NBRC 110442 / TA 4) protein is Large ribosomal subunit protein uL13.